The following is a 476-amino-acid chain: Cysteine--tRNA ligase (476 aa).

Cys-27 is a Zn(2+) binding site. The short motif at 29–39 (PTTYNYIHLGN) is the 'HIGH' region element. The Zn(2+) site is built by Cys-207, His-232, and Glu-236. The 'KMSKS' region motif lies at 264-268 (KMSKS). Lys-267 is an ATP binding site.

Belongs to the class-I aminoacyl-tRNA synthetase family. In terms of assembly, monomer. Requires Zn(2+) as cofactor.

The protein localises to the cytoplasm. It catalyses the reaction tRNA(Cys) + L-cysteine + ATP = L-cysteinyl-tRNA(Cys) + AMP + diphosphate. The protein is Cysteine--tRNA ligase of Moorella thermoacetica (strain ATCC 39073 / JCM 9320).